A 406-amino-acid chain; its full sequence is Probable tRNA sulfurtransferase (406 aa).

In terms of domain architecture, THUMP spans 60–162 (PEAKARLQDT…PGAALLEVER (103 aa)). ATP is bound by residues 180 to 181 (LL), 205 to 206 (HF), Arg-262, Gly-284, and Gln-293.

The protein belongs to the ThiI family.

The protein localises to the cytoplasm. It carries out the reaction [ThiI sulfur-carrier protein]-S-sulfanyl-L-cysteine + a uridine in tRNA + 2 reduced [2Fe-2S]-[ferredoxin] + ATP + H(+) = [ThiI sulfur-carrier protein]-L-cysteine + a 4-thiouridine in tRNA + 2 oxidized [2Fe-2S]-[ferredoxin] + AMP + diphosphate. It catalyses the reaction [ThiS sulfur-carrier protein]-C-terminal Gly-Gly-AMP + S-sulfanyl-L-cysteinyl-[cysteine desulfurase] + AH2 = [ThiS sulfur-carrier protein]-C-terminal-Gly-aminoethanethioate + L-cysteinyl-[cysteine desulfurase] + A + AMP + 2 H(+). Its pathway is cofactor biosynthesis; thiamine diphosphate biosynthesis. Its function is as follows. Catalyzes the ATP-dependent transfer of a sulfur to tRNA to produce 4-thiouridine in position 8 of tRNAs, which functions as a near-UV photosensor. Also catalyzes the transfer of sulfur to the sulfur carrier protein ThiS, forming ThiS-thiocarboxylate. This is a step in the synthesis of thiazole, in the thiamine biosynthesis pathway. The sulfur is donated as persulfide by IscS. This is Probable tRNA sulfurtransferase from Thermus thermophilus (strain ATCC 27634 / DSM 579 / HB8).